Reading from the N-terminus, the 579-residue chain is Laccase (579 aa).

The segment at residues 1 to 31 (MTDWSRRRFLQTGAALGIAGTLPQTTTEVSA) is a signal peptide (tat-type signal). The Plastocyanin-like 1 domain maps to 82–214 (WGFDGSYPGP…AGLLGLYSIT (133 aa)). Cu cation is bound by residues H145, H147, H192, and H194. The segment at 372–401 (VSDPSTPPEDASADPTSLSLPTPASYDESD) is disordered. The region spanning 423 to 530 (LNGHVFGDED…NKMMIPFVVE (108 aa)) is the Plastocyanin-like 2 domain. A glycan (N-linked (GlcNAc...) asparagine) is linked at N449. H455, H458, H460, H512, C513, H514, H518, and M523 together coordinate Cu cation. N-linked (GlcNAc...) asparagine glycosylation occurs at N557.

Belongs to the multicopper oxidase family. Requires Cu(2+) as cofactor. In terms of processing, exported by the Tat system. Post-translationally, glycosylated.

Its subcellular location is the secreted. It catalyses the reaction 4 hydroquinone + O2 = 4 benzosemiquinone + 2 H2O. With respect to regulation, inhibited by 1 mM NaN(3), 10 mM thiourea, 10 mM 1,10-phenanthroline, 0.1 mM DL-dithiothreitol (DTT) and 1 mM L-cysteine. The inhibition by DTT and L-cysteine is likely caused by reduction of the oxidized substrate and not by inhibition of the enzyme. In terms of biological role, catalyzes the oxidation of a wide variety of organic substrates, including bilirubin, syringaldazine (SGZ), 2,2'-azino-di-(3-ethylbenzothiazoline)-6-sulfonic acid (ABTS) and dimethoxyphenol (DMP). No oxidation of Fe(2+) or guaiacol. In Haloferax volcanii (strain ATCC 29605 / DSM 3757 / JCM 8879 / NBRC 14742 / NCIMB 2012 / VKM B-1768 / DS2) (Halobacterium volcanii), this protein is Laccase (lccA).